The chain runs to 975 residues: Glycine dehydrogenase (decarboxylating) (975 aa).

Lys723 is modified (N6-(pyridoxal phosphate)lysine).

The protein belongs to the GcvP family. The glycine cleavage system is composed of four proteins: P, T, L and H. Requires pyridoxal 5'-phosphate as cofactor.

The enzyme catalyses N(6)-[(R)-lipoyl]-L-lysyl-[glycine-cleavage complex H protein] + glycine + H(+) = N(6)-[(R)-S(8)-aminomethyldihydrolipoyl]-L-lysyl-[glycine-cleavage complex H protein] + CO2. Functionally, the glycine cleavage system catalyzes the degradation of glycine. The P protein binds the alpha-amino group of glycine through its pyridoxal phosphate cofactor; CO(2) is released and the remaining methylamine moiety is then transferred to the lipoamide cofactor of the H protein. This Burkholderia ambifaria (strain ATCC BAA-244 / DSM 16087 / CCUG 44356 / LMG 19182 / AMMD) (Burkholderia cepacia (strain AMMD)) protein is Glycine dehydrogenase (decarboxylating).